We begin with the raw amino-acid sequence, 488 residues long: Glutamyl-tRNA(Gln) amidotransferase subunit A (488 aa).

Catalysis depends on charge relay system residues Lys-77 and Ser-152. Ser-176 (acyl-ester intermediate) is an active-site residue.

The protein belongs to the amidase family. GatA subfamily. As to quaternary structure, heterotrimer of A, B and C subunits.

The catalysed reaction is L-glutamyl-tRNA(Gln) + L-glutamine + ATP + H2O = L-glutaminyl-tRNA(Gln) + L-glutamate + ADP + phosphate + H(+). In terms of biological role, allows the formation of correctly charged Gln-tRNA(Gln) through the transamidation of misacylated Glu-tRNA(Gln) in organisms which lack glutaminyl-tRNA synthetase. The reaction takes place in the presence of glutamine and ATP through an activated gamma-phospho-Glu-tRNA(Gln). The chain is Glutamyl-tRNA(Gln) amidotransferase subunit A from Streptococcus mutans serotype c (strain ATCC 700610 / UA159).